The following is a 603-amino-acid chain: Glutathione-regulated potassium-efflux system protein KefB (603 aa).

13 consecutive transmembrane segments (helical) span residues Ala5–Ala25, Ile29–Phe49, Val53–Leu73, Ile87–Tyr107, Ser115–Met135, Val152–Gly172, Trp180–Arg202, Phe207–Gly227, Leu230–Leu250, Gly268–Tyr288, Ile291–Phe311, Phe326–Ser346, and Pro356–Ile376. The 122-residue stretch at Glu400 to Ser521 folds into the RCK N-terminal domain.

Belongs to the monovalent cation:proton antiporter 2 (CPA2) transporter (TC 2.A.37) family. KefB subfamily. In terms of assembly, interacts with the regulatory subunit KefG.

It localises to the cell inner membrane. In terms of biological role, pore-forming subunit of a potassium efflux system that confers protection against electrophiles. Catalyzes K(+)/H(+) antiport. This Pectobacterium atrosepticum (strain SCRI 1043 / ATCC BAA-672) (Erwinia carotovora subsp. atroseptica) protein is Glutathione-regulated potassium-efflux system protein KefB.